The chain runs to 161 residues: Large ribosomal subunit protein uL11 (161 aa).

The protein belongs to the universal ribosomal protein uL11 family. In terms of assembly, part of the ribosomal stalk of the 50S ribosomal subunit. Interacts with L10 and the large rRNA to form the base of the stalk. L10 forms an elongated spine to which L12 dimers bind in a sequential fashion forming a multimeric L10(L12)X complex.

Forms part of the ribosomal stalk which helps the ribosome interact with GTP-bound translation factors. The polypeptide is Large ribosomal subunit protein uL11 (Methanosarcina acetivorans (strain ATCC 35395 / DSM 2834 / JCM 12185 / C2A)).